The primary structure comprises 424 residues: Glycerol-3-phosphate dehydrogenase [NAD(+)] (424 aa).

Residues 79–84, F111, and F167 contribute to the NAD(+) site; that span reads GSGNWG. K190 contributes to the substrate binding site. Position 223 (A223) interacts with NAD(+). K283 (proton acceptor) is an active-site residue. NAD(+)-binding residues include R348 and Q377. A substrate-binding site is contributed by 348-349; it reads RN.

This sequence belongs to the NAD-dependent glycerol-3-phosphate dehydrogenase family.

It carries out the reaction sn-glycerol 3-phosphate + NAD(+) = dihydroxyacetone phosphate + NADH + H(+). In Eremothecium gossypii (strain ATCC 10895 / CBS 109.51 / FGSC 9923 / NRRL Y-1056) (Yeast), this protein is Glycerol-3-phosphate dehydrogenase [NAD(+)] (GPD).